A 1137-amino-acid polypeptide reads, in one-letter code: DNA-directed RNA polymerase III subunit RPC2 (1137 aa).

The C4-type zinc finger occupies 1084–1099 (DVCRTCGRMAYCSWCH). Residues C1086, C1089, C1098, and C1101 each coordinate Zn(2+).

This sequence belongs to the RNA polymerase beta chain family. As to quaternary structure, component of the RNA polymerase III (Pol III) complex consisting of 17 subunits.

It localises to the nucleus. The enzyme catalyses RNA(n) + a ribonucleoside 5'-triphosphate = RNA(n+1) + diphosphate. In terms of biological role, DNA-dependent RNA polymerase catalyzes the transcription of DNA into RNA using the four ribonucleoside triphosphates as substrates. Second largest core component of RNA polymerase III which synthesizes small RNAs, such as 5S rRNA and tRNAs. Proposed to contribute to the polymerase catalytic activity and forms the polymerase active center together with the largest subunit. Pol III is composed of mobile elements and Polr3B is part of the core element with the central large cleft and probably a clamp element that moves to open and close the cleft. The polypeptide is DNA-directed RNA polymerase III subunit RPC2 (Drosophila melanogaster (Fruit fly)).